We begin with the raw amino-acid sequence, 571 residues long: Streptolysin O (571 aa).

The first 33 residues, 1 to 33 (MSNKKTFKKYSRVAGLLTVALIIGNLVTANAES), serve as a signal peptide directing secretion. 2 disordered regions span residues 32 to 56 (ESNKQNTASTETTTTNEQPKPESSE) and 81 to 108 (KEMPLESAEKEEKKSEDKKKSEEDHTEE). Residues 37-48 (NTASTETTTTNE) show a composition bias toward low complexity. 4 consecutive transmembrane segments (beta stranded) span residues 260 to 273 (KSQIEAALNVNSKI), 280 to 289 (IDFKSISKGE), 358 to 367 (SNDVEAAFSA), and 375 to 387 (KTNGKYSDILENS). The Conserved undecapeptide motif lies at 529–539 (ECTGLAWEWWR). Residue threonine 561 is a short sequence motif, cholesterol binding.

Belongs to the cholesterol-dependent cytolysin family. Homooligomeric pore complex of 35 to 50 subunits; when inserted in the host membrane.

The protein resides in the secreted. The protein localises to the host cell membrane. A cholesterol-dependent toxin that causes cytolysis by forming pores in cholesterol containing host membranes. After binding to target membranes, the protein undergoes a major conformation change, leading to its insertion in the host membrane and formation of an oligomeric pore complex. Cholesterol is required for binding to host membranes, membrane insertion and pore formation; cholesterol binding is mediated by a Thr-Leu pair in the C-terminus. Can be reversibly inactivated by oxidation. This chain is Streptolysin O (slo), found in Streptococcus pyogenes serotype M6 (strain ATCC BAA-946 / MGAS10394).